Consider the following 20-residue polypeptide: Unknown protein NF007 from 2D-PAGE (20 aa).

The protein is Unknown protein NF007 from 2D-PAGE of Naegleria fowleri (Brain eating amoeba).